Here is an 898-residue protein sequence, read N- to C-terminus: Transportin-1 (898 aa).

N-acetylmethionine is present on Met1. HEAT repeat units lie at residues 19 to 46, 51 to 89, 98 to 131, 137 to 174, 181 to 211, 224 to 251, 263 to 290, 306 to 397, 405 to 433, 445 to 472, 486 to 519, 527 to 560, 568 to 606, 614 to 665, 676 to 707, 715 to 748, 756 to 791, 799 to 832, 841 to 872, and 875 to 895; these read GLQQILQLLKESQSPDTTIQRTVQQKLE, YPDFNNYLIFVLTKLKSEDEPTRSLSGLILKNNVKAHFQ, FIKSECLNNIGDSSPLIRATVGILITTIASKGEL, LLPKLCSLLDSEDYNTCEGAFGALQKICEDSAEILDSD, NIMIPKFLQFFKHSSPKIRSHAVACVNQFII, FIENLFALAGDEEPEVRKNVCRALVMLL, HNIVEYMLQRTQDQDENVALEACEFWLT, PKLI…LANV, HILPLLKELLFHHEWVVKESGILVLGAIA, PELIPHLIQCLSDKKALVRSITCWTLSR, LKPLMTELLKRILDSNKRVQEAACSAFATLEEEA, LAYILDTLVFAFSKYQHKNLLILYDAIGTLADSV, EYIQMLMPPLIQKWNMLKDEDKDLFPLLECLSSVATALQ, EPVY…GLGG, ILTLMYQCMQDKMPEVRQSSFALLGDLTKACF, ADFMPILGTNLNPEFISVCNNATWAIGEISIQMG, PMVLHQLVEIINRPNTPKTLLENTAITIGRLGYVCP, QQFIRPWCTSLRNIRDNEEKDSAFRGICTMISVN, IFFCDAVASWINPKDDLRDMFCKILHGFKNQV, and ENWRRFSDQFPLPLKERLAAF. The 69-residue stretch at 41–109 folds into the Importin N-terminal domain; sequence VQQKLEQLNQ…KSECLNNIGD (69 aa). Residues 347-374 are disordered; sequence FHRSRTVAQQHDEDGIEEEDDDDDEIDD. Residues 360–374 are compositionally biased toward acidic residues; sequence DGIEEEDDDDDEIDD.

This sequence belongs to the importin beta family. Importin beta-2 subfamily. As to quaternary structure, identified in a complex that contains TNPO1, RAN and RANBP1. Binds HNRPA1, HNRPA2, HNRNPDL, RPS7, RPL5 and RAN. Interacts with H2A, H2B, H3 and H4 histones. Interacts with isoform 1 and isoform 5 of ADAR/ADAR1 (via DRBM 3 domain). Interacts with SNAI1 (via zinc fingers); the interaction mediates SNAI1 nuclear import. Interacts with SNAI2 (via zinc fingers). Interacts with RPL23A (via BIB domain) and SRP19; this interaction is involved in RPL23A and SRP19 import into the nucleus. Interacts (via HEAT repeats 8-12) with BAP1 (via non-classical PY-NLS); this interaction is direct, is involved in BAP1 nuclear import and disrupts BAP1 homodimerization. (Microbial infection) Binds to HIV-1 Rev.

It is found in the cytoplasm. It localises to the nucleus. Functionally, functions in nuclear protein import as nuclear transport receptor. Serves as receptor for nuclear localization signals (NLS) in cargo substrates. May mediate docking of the importin/substrate complex to the nuclear pore complex (NPC) through binding to nucleoporin and the complex is subsequently translocated through the pore by an energy requiring, Ran-dependent mechanism. At the nucleoplasmic side of the NPC, Ran binds to the importin, the importin/substrate complex dissociates and importin is re-exported from the nucleus to the cytoplasm where GTP hydrolysis releases Ran. The directionality of nuclear import is thought to be conferred by an asymmetric distribution of the GTP- and GDP-bound forms of Ran between the cytoplasm and nucleus. Involved in nuclear import of M9-containing proteins. In vitro, binds directly to the M9 region of the heterogeneous nuclear ribonucleoproteins (hnRNP), A1 and A2 and mediates their nuclear import. Involved in hnRNP A1/A2 nuclear export. Mediates the nuclear import of ribosomal proteins RPL23A, RPS7 and RPL5. In vitro, mediates nuclear import of H2A, H2B, H3 and H4 histones. In vitro, mediates nuclear import of SRP19. Mediates nuclear import of ADAR/ADAR1 isoform 1 and isoform 5 in a RanGTP-dependent manner. Main mediator of PR-DUB complex component BAP1 nuclear import; acts redundantly with the karyopherins KPNA1 and KPNA2. Its function is as follows. (Microbial infection) In case of HIV-1 infection, binds and mediates the nuclear import of HIV-1 Rev. The polypeptide is Transportin-1 (TNPO1) (Homo sapiens (Human)).